The chain runs to 493 residues: Aspartate-semialdehyde dehydrogenase (Non-phosphorylating) (493 aa).

NADP(+) contacts are provided by residues 160–161, 184–187, and 237–238; these read WN, KPAH, and GS. The Proton acceptor role is filled by E259. L260 contributes to the NADP(+) binding site. The Nucleophile role is filled by C293. E390 is a binding site for NADP(+).

The protein belongs to the aldehyde dehydrogenase family.

It localises to the cytoplasm. The enzyme catalyses L-aspartate 4-semialdehyde + NAD(+) + H2O = L-aspartate + NADH + 2 H(+). In terms of biological role, involved in the degradation of ectoine, which allows H.elongata to utilize ectoine as both a carbon and a nitrogen source for growth. Probably catalyzes the NAD(+)-dependent oxidation of L-aspartate-semialdehyde to L-aspartate. The sequence is that of Aspartate-semialdehyde dehydrogenase (Non-phosphorylating) from Halomonas elongata (strain ATCC 33173 / DSM 2581 / NBRC 15536 / NCIMB 2198 / 1H9).